The chain runs to 270 residues: tRNA pseudouridine synthase A (270 aa).

The active-site Nucleophile is the Asp-51. Substrate is bound at residue Tyr-109.

The protein belongs to the tRNA pseudouridine synthase TruA family. In terms of assembly, homodimer.

The catalysed reaction is uridine(38/39/40) in tRNA = pseudouridine(38/39/40) in tRNA. Its function is as follows. Formation of pseudouridine at positions 38, 39 and 40 in the anticodon stem and loop of transfer RNAs. In Burkholderia multivorans (strain ATCC 17616 / 249), this protein is tRNA pseudouridine synthase A.